Reading from the N-terminus, the 149-residue chain is Transcriptional repressor NrdR (149 aa).

The segment at 3–34 is a zinc-finger region; sequence CPFCGHLETQVVETRISEDAEFIRRRRQCGAC. The ATP-cone domain occupies 49–139; that stretch reads PSIVKKDGRR…VYRSFEDIDE (91 aa).

Belongs to the NrdR family. The cofactor is Zn(2+).

Negatively regulates transcription of bacterial ribonucleotide reductase nrd genes and operons by binding to NrdR-boxes. The chain is Transcriptional repressor NrdR from Polaromonas naphthalenivorans (strain CJ2).